A 487-amino-acid chain; its full sequence is Glycogen synthase (487 aa).

Lysine 20 is a binding site for ADP-alpha-D-glucose.

The protein belongs to the glycosyltransferase 1 family. Bacterial/plant glycogen synthase subfamily.

The catalysed reaction is [(1-&gt;4)-alpha-D-glucosyl](n) + ADP-alpha-D-glucose = [(1-&gt;4)-alpha-D-glucosyl](n+1) + ADP + H(+). Its pathway is glycan biosynthesis; glycogen biosynthesis. Functionally, synthesizes alpha-1,4-glucan chains using ADP-glucose. This chain is Glycogen synthase, found in Aliivibrio fischeri (strain ATCC 700601 / ES114) (Vibrio fischeri).